The primary structure comprises 431 residues: Phosphoribosylamine--glycine ligase (431 aa).

In terms of domain architecture, ATP-grasp spans 109–316 (KDFLARHGIP…LVDLVEAAID (208 aa)). 135 to 196 (VREKGAPIVV…EEFLDGEEAS (62 aa)) is an ATP binding site. Residues Glu-286 and Asn-288 each coordinate Mg(2+).

Belongs to the GARS family. Mg(2+) is required as a cofactor. It depends on Mn(2+) as a cofactor.

It carries out the reaction 5-phospho-beta-D-ribosylamine + glycine + ATP = N(1)-(5-phospho-beta-D-ribosyl)glycinamide + ADP + phosphate + H(+). It functions in the pathway purine metabolism; IMP biosynthesis via de novo pathway; N(1)-(5-phospho-D-ribosyl)glycinamide from 5-phospho-alpha-D-ribose 1-diphosphate: step 2/2. The polypeptide is Phosphoribosylamine--glycine ligase (Xanthomonas campestris pv. campestris (strain ATCC 33913 / DSM 3586 / NCPPB 528 / LMG 568 / P 25)).